Consider the following 121-residue polypeptide: Small ribosomal subunit protein bS16m (121 aa).

Belongs to the bacterial ribosomal protein bS16 family. Component of the mitochondrial small ribosomal subunit (mt-SSU). Mature yeast 74S mitochondrial ribosomes consist of a small (37S) and a large (54S) subunit. The 37S small subunit contains a 15S ribosomal RNA (15S mt-rRNA) and 34 different proteins. The 54S large subunit contains a 21S rRNA (21S mt-rRNA) and 46 different proteins.

It localises to the mitochondrion. Functionally, component of the mitochondrial ribosome (mitoribosome), a dedicated translation machinery responsible for the synthesis of mitochondrial genome-encoded proteins, including at least some of the essential transmembrane subunits of the mitochondrial respiratory chain. The mitoribosomes are attached to the mitochondrial inner membrane and translation products are cotranslationally integrated into the membrane. In Saccharomyces cerevisiae (strain ATCC 204508 / S288c) (Baker's yeast), this protein is Small ribosomal subunit protein bS16m (MRPS16).